Consider the following 589-residue polypeptide: Pyruvate kinase (589 aa).

Substrate is bound at residue Arg-32. Residues Asn-34, Ser-36, Asp-66, and Thr-67 each coordinate K(+). 34–37 (NFSH) is a binding site for ATP. ATP contacts are provided by Arg-73 and Lys-157. Glu-223 is a Mg(2+) binding site. Residues Gly-246, Asp-247, and Thr-279 each contribute to the substrate site. Asp-247 provides a ligand contact to Mg(2+).

This sequence belongs to the pyruvate kinase family. In the C-terminal section; belongs to the PEP-utilizing enzyme family. Homotetramer. The cofactor is Mg(2+). Requires K(+) as cofactor.

The enzyme catalyses pyruvate + ATP = phosphoenolpyruvate + ADP + H(+). It functions in the pathway carbohydrate degradation; glycolysis; pyruvate from D-glyceraldehyde 3-phosphate: step 5/5. Strongly activated by glucose-6-phosphate, ribose-5-phosphate and fructose-6-phosphate. Weak activator AMP and weak inhibitor fructose-1,6-bisphosphate can act as strong inhibitors in the presence of strong activators. In Lactobacillus delbrueckii subsp. bulgaricus, this protein is Pyruvate kinase (pyk).